Reading from the N-terminus, the 829-residue chain is DNA ligase (829 aa).

NAD(+) is bound by residues 38 to 42 (DAEYD), 87 to 88 (SL), and Glu127. The N6-AMP-lysine intermediate role is filled by Lys129. 4 residues coordinate NAD(+): Arg150, Glu187, Lys305, and Lys329. Cys455, Cys458, Cys473, and Cys479 together coordinate Zn(2+). A disordered region spans residues 534 to 564 (ETADKGSSENENGDAETVSGDLSKYNTQNGK). The 78-residue stretch at 752 to 829 (GINKAVAGKT…SEAELLTLLC (78 aa)) folds into the BRCT domain.

This sequence belongs to the NAD-dependent DNA ligase family. LigA subfamily. Mg(2+) is required as a cofactor. Mn(2+) serves as cofactor.

The catalysed reaction is NAD(+) + (deoxyribonucleotide)n-3'-hydroxyl + 5'-phospho-(deoxyribonucleotide)m = (deoxyribonucleotide)n+m + AMP + beta-nicotinamide D-nucleotide.. Its function is as follows. DNA ligase that catalyzes the formation of phosphodiester linkages between 5'-phosphoryl and 3'-hydroxyl groups in double-stranded DNA using NAD as a coenzyme and as the energy source for the reaction. It is essential for DNA replication and repair of damaged DNA. The protein is DNA ligase of Neisseria gonorrhoeae (strain ATCC 700825 / FA 1090).